The chain runs to 119 residues: Mitochondrial zinc maintenance protein 1, mitochondrial (119 aa).

The N-terminal 14 residues, methionine 1–leucine 14, are a transit peptide targeting the mitochondrion.

It belongs to the complex I LYR family. MZM1 subfamily. As to quaternary structure, interacts with RIP1.

The protein localises to the mitochondrion matrix. Assembly factor required for Rieske Fe-S protein RIP1 incorporation into the cytochrome b-c1 (CIII) complex. Functions as a chaperone, binding to this subunit within the mitochondrial matrix and stabilizing it prior to its translocation and insertion into the late CIII dimeric intermediate within the mitochondrial inner membrane. Modulates the mitochondrial matrix zinc pool. This is Mitochondrial zinc maintenance protein 1, mitochondrial (MZM1) from Debaryomyces hansenii (strain ATCC 36239 / CBS 767 / BCRC 21394 / JCM 1990 / NBRC 0083 / IGC 2968) (Yeast).